A 448-amino-acid chain; its full sequence is Adenosylhomocysteinase (448 aa).

Positions 61, 136, and 161 each coordinate substrate. 162 to 164 lines the NAD(+) pocket; the sequence is TTA. Substrate-binding residues include Lys-191 and Asp-195. NAD(+)-binding positions include Asn-196, 225–230, Glu-248, Asn-283, 304–306, and Asn-360; these read GYGDVG and IGH.

The protein belongs to the adenosylhomocysteinase family. NAD(+) is required as a cofactor.

The protein localises to the cytoplasm. The enzyme catalyses S-adenosyl-L-homocysteine + H2O = L-homocysteine + adenosine. The protein operates within amino-acid biosynthesis; L-homocysteine biosynthesis; L-homocysteine from S-adenosyl-L-homocysteine: step 1/1. May play a key role in the regulation of the intracellular concentration of adenosylhomocysteine. The polypeptide is Adenosylhomocysteinase (Rhodopirellula baltica (strain DSM 10527 / NCIMB 13988 / SH1)).